A 311-amino-acid polypeptide reads, in one-letter code: GTP cyclohydrolase FolE2 (311 aa).

This sequence belongs to the GTP cyclohydrolase IV family.

The catalysed reaction is GTP + H2O = 7,8-dihydroneopterin 3'-triphosphate + formate + H(+). It functions in the pathway cofactor biosynthesis; 7,8-dihydroneopterin triphosphate biosynthesis; 7,8-dihydroneopterin triphosphate from GTP: step 1/1. Converts GTP to 7,8-dihydroneopterin triphosphate. This Hydrogenovibrio crunogenus (strain DSM 25203 / XCL-2) (Thiomicrospira crunogena) protein is GTP cyclohydrolase FolE2.